Consider the following 468-residue polypeptide: TFIIA-alpha and beta-like factor (468 aa).

Disordered regions lie at residues 215–236 (DRRLLPGNELRPQESSPYLSLP) and 379–416 (DSVSNEDSTANSSDNEDHQINAPEEDPLNSGDDVSEQD). Over residues 380-391 (SVSNEDSTANSS) the composition is skewed to polar residues. Residues 401–416 (PEEDPLNSGDDVSEQD) are compositionally biased toward acidic residues.

Belongs to the TFIIA subunit 1 family. Testis specific. Expressed in pachytene spermatocytes and haploid spermatids.

It localises to the nucleus. Functionally, may function as a testis specific transcription factor. Binds DNA in conjunction with GTF2A2 and TBP (the TATA-binding protein) and together with GTF2A2, allows mRNA transcription. The sequence is that of TFIIA-alpha and beta-like factor (Gtf2a1l) from Mus musculus (Mouse).